The following is a 174-amino-acid chain: Co-chaperone protein HscB homolog (174 aa).

Residues 2-74 (NYFELFKFSP…IRRAEHLLSL (73 aa)) form the J domain.

The protein belongs to the HscB family. Interacts with HscA and stimulates its ATPase activity.

Co-chaperone involved in the maturation of iron-sulfur cluster-containing proteins. Seems to help targeting proteins to be folded toward HscA. The polypeptide is Co-chaperone protein HscB homolog (Shewanella sp. (strain W3-18-1)).